Reading from the N-terminus, the 303-residue chain is N-acetyl-D-glucosamine kinase (303 aa).

ATP is bound by residues 4 to 11 (GFDIGGTK) and 133 to 140 (GVGGGLIF). Residues H157, C177, C179, and C184 each contribute to the Zn(2+) site.

It belongs to the ROK (NagC/XylR) family. NagK subfamily.

It carries out the reaction N-acetyl-D-glucosamine + ATP = N-acetyl-D-glucosamine 6-phosphate + ADP + H(+). Its pathway is cell wall biogenesis; peptidoglycan recycling. In terms of biological role, catalyzes the phosphorylation of N-acetyl-D-glucosamine (GlcNAc) derived from cell-wall degradation, yielding GlcNAc-6-P. This chain is N-acetyl-D-glucosamine kinase, found in Shigella boydii serotype 4 (strain Sb227).